We begin with the raw amino-acid sequence, 938 residues long: MPSLEPWLWGDSCSWLGMLAMLRLRLHKSNMDFTCLFCCSLAFVLYLNTLGAGFVYDDRRAILANADVSGGTPWQRSFSNDFWGTPLTDSGSHGSWRPLCVLSFRLNYLIGGGFAPWGFHLVNNLLHCVATALVVRVARTLLASVWAVLAAGALFAAHPIHTEAVAGVVGRADLAACVCYLLTYLSYLRHMRWRESGDPRQWLALGATLILAAAGLLCKETAITALLVCALFDVMRGLSGQVDKQRLRSVCIVLGALFCMAYCRLVIVPGPQTAFSSADNPIARTPSAWTRLLTFLYLPVFNLRLLLQPNVLSFDWGMDALPRVTSLWDRRNAQSACFYSVLVGVAWGSCRQLLSGSKEVTHCGVSSTFPQYHIQKVASRKSRSKRKRLANNTKYQAFEAAYHQQQQEALPCRDCNNNNSSGYVYEGSSPVAQAPAQAPHLVSSAFRGSRSSSSCSNSTNSSSSSSSSSSSSSSSSSSLSGGFQCSSKDYALEGMSPANRHACVLIMSLSFLALPFLPASNLLFYVGFVVAERLLYLPSVGFCLLVGYGVSKLMSCNQRTRNILLLSFSLLLAAMSLRTLRRNADWRDEESLYRSAIAINPPKALGNLGSVLSSQGRYEEAKQVLQEAIRFRPNMADVHFNLGILHQNQQVYPAAVECFQRAIKFRPNLAVAYLNLGISFIALGKRQQAIEILQAGSNLDGAAVRDRTAHDQARSSAYLQLGALYVEQGKLQRALAIYREALSSLPGLPQQREILYQRIGDVLGRLQQWDEAERHHRAALELQPNQVAAHLSYGITLARNSSRASEAEMWFKRALKLAPEQASVYHHYAEFLSLQSRHHESAIYHRRAAELAPNDYTLVVAAATAMRLLDRKVDAEMWYRKAVALRPGDAHAHTNLGAILHLLGRTNHAAASYKAALRLQPGDAITLGNLAKLGVTNV.

Position 1 (Met-1) is a topological domain, cytoplasmic. A helical transmembrane segment spans residues 2–22; that stretch reads PSLEPWLWGDSCSWLGMLAML. At 23–34 the chain is on the extracellular side; the sequence is RLRLHKSNMDFT. The chain crosses the membrane as a helical span at residues 35–55; sequence CLFCCSLAFVLYLNTLGAGFV. The Cytoplasmic segment spans residues 56 to 108; it reads YDDRRAILANADVSGGTPWQRSFSNDFWGTPLTDSGSHGSWRPLCVLSFRLNY. Residues 109-129 traverse the membrane as a helical segment; it reads LIGGGFAPWGFHLVNNLLHCV. The Extracellular portion of the chain corresponds to 130–139; it reads ATALVVRVAR. A helical transmembrane segment spans residues 140 to 160; that stretch reads TLLASVWAVLAAGALFAAHPI. The Cytoplasmic segment spans residues 161–164; that stretch reads HTEA. A helical membrane pass occupies residues 165–185; sequence VAGVVGRADLAACVCYLLTYL. Over 186 to 208 the chain is Extracellular; the sequence is SYLRHMRWRESGDPRQWLALGAT. The chain crosses the membrane as a helical span at residues 209–229; it reads LILAAAGLLCKETAITALLVC. The Cytoplasmic portion of the chain corresponds to 230-249; sequence ALFDVMRGLSGQVDKQRLRS. The helical transmembrane segment at 250–270 threads the bilayer; the sequence is VCIVLGALFCMAYCRLVIVPG. The Extracellular portion of the chain corresponds to 271–291; sequence PQTAFSSADNPIARTPSAWTR. A helical membrane pass occupies residues 292 to 312; that stretch reads LLTFLYLPVFNLRLLLQPNVL. Over 313-510 the chain is Cytoplasmic; the sequence is SFDWGMDALP…HACVLIMSLS (198 aa). Residues 450-480 are disordered; it reads RSSSSCSNSTNSSSSSSSSSSSSSSSSSSLS. The helical transmembrane segment at 511 to 531 threads the bilayer; the sequence is FLALPFLPASNLLFYVGFVVA. Topologically, residues 532-533 are extracellular; sequence ER. A helical transmembrane segment spans residues 534-554; the sequence is LLYLPSVGFCLLVGYGVSKLM. The Cytoplasmic portion of the chain corresponds to 555–562; it reads SCNQRTRN. The chain crosses the membrane as a helical span at residues 563–580; sequence ILLLSFSLLLAAMSLRTL. The Extracellular portion of the chain corresponds to 581 to 938; it reads RRNADWRDEE…NLAKLGVTNV (358 aa). 9 TPR repeats span residues 602 to 635, 636 to 669, 670 to 703, 715 to 748, 753 to 786, 788 to 821, 822 to 855, 856 to 889, and 890 to 923; these read PKAL…RPNM, ADVH…RPNL, AVAY…DGAA, SSAY…LPGL, EILY…QPNQ, AAHL…APEQ, ASVY…APND, YTLV…RPGD, and AHAH…QPGD. An N-linked (GlcNAc...) asparagine glycan is attached at Asn-800.

Belongs to the TMTC family.

It localises to the membrane. It is found in the endoplasmic reticulum. It carries out the reaction a di-trans,poly-cis-dolichyl beta-D-mannosyl phosphate + L-seryl-[protein] = 3-O-(alpha-D-mannosyl)-L-seryl-[protein] + a di-trans,poly-cis-dolichyl phosphate + H(+). The enzyme catalyses a di-trans,poly-cis-dolichyl beta-D-mannosyl phosphate + L-threonyl-[protein] = 3-O-(alpha-D-mannosyl)-L-threonyl-[protein] + a di-trans,poly-cis-dolichyl phosphate + H(+). It functions in the pathway protein modification; protein glycosylation. In terms of biological role, transfers mannosyl residues to the hydroxyl group of serine or threonine residues. The protein is Protein O-mannosyl-transferase Tmtc2 of Drosophila melanogaster (Fruit fly).